Here is a 188-residue protein sequence, read N- to C-terminus: Insulin-like growth factor 1 (188 aa).

The b stretch occupies residues Gly-45–Thr-73. Disulfide bonds link Cys-50/Cys-92, Cys-62/Cys-105, and Cys-91/Cys-96. Residues Gly-74–Arg-85 form a c region. The a stretch occupies residues Gly-86–Ala-106. A d region spans residues Pro-107–Ala-114. A propeptide spans Arg-115 to Met-188 (e peptide). The interval Arg-115 to Met-188 is disordered. A compositionally biased stretch (basic and acidic residues) spans Arg-140–Thr-153.

This sequence belongs to the insulin family. As to expression, all the isoforms are expressed in embryos, juvenile and adult liver, muscle and brain. At least one isoform is expressed in heart, kidney, testes, ovary, adipose tissue and spleen of juvenile salmon.

The protein localises to the secreted. Functionally, the insulin-like growth factors, isolated from plasma, are structurally and functionally related to insulin but have a much higher growth-promoting activity. Acts as a ligand for IGF1R. Binds to the alpha subunit of IGF1R, leading to the activation of the intrinsic tyrosine kinase activity which autophosphorylates tyrosine residues in the beta subunit thus initiatiating a cascade of down-stream signaling events leading to activation of the PI3K-AKT/PKB and the Ras-MAPK pathways. Binds to integrins. Its binding to integrins and subsequent ternary complex formation with integrins and IGFR1 are essential for IGF1 signaling. This chain is Insulin-like growth factor 1, found in Oncorhynchus kisutch (Coho salmon).